Consider the following 175-residue polypeptide: Succinate dehydrogenase assembly factor 2, mitochondrial (175 aa).

Positions 42–71 (PFSDPELAHANNSLPSNSEEWPLPEPLDRT) are disordered. Over residues 51–60 (ANNSLPSNSE) the composition is skewed to polar residues.

It belongs to the SDHAF2 family. As to quaternary structure, interacts with the flavoprotein subunit within the SDH catalytic dimer.

It is found in the mitochondrion matrix. Plays an essential role in the assembly of succinate dehydrogenase (SDH), an enzyme complex (also referred to as respiratory complex II) that is a component of both the tricarboxylic acid (TCA) cycle and the mitochondrial electron transport chain, and which couples the oxidation of succinate to fumarate with the reduction of ubiquinone (coenzyme Q) to ubiquinol. Required for flavinylation (covalent attachment of FAD) of the flavoprotein subunit of the SDH catalytic dimer. This is Succinate dehydrogenase assembly factor 2, mitochondrial from Cryptococcus neoformans var. neoformans serotype D (strain B-3501A) (Filobasidiella neoformans).